The chain runs to 721 residues: Polyribonucleotide nucleotidyltransferase (721 aa).

Residues aspartate 495 and aspartate 501 each coordinate Mg(2+). In terms of domain architecture, KH spans 562-621 (PRITTIKIRPERIKDIIGPGGKTIKDITARTGTSINIEDDGSVSIASPNQDKVEEAIKMI). Positions 631-699 (GRIYLGTVRK…RSGKIRLSRK (69 aa)) constitute an S1 motif domain. Positions 699-721 (KEALADSAKKSEGTEPPKGEPAK) are disordered.

Belongs to the polyribonucleotide nucleotidyltransferase family. Mg(2+) serves as cofactor.

The protein localises to the cytoplasm. It carries out the reaction RNA(n+1) + phosphate = RNA(n) + a ribonucleoside 5'-diphosphate. Involved in mRNA degradation. Catalyzes the phosphorolysis of single-stranded polyribonucleotides processively in the 3'- to 5'-direction. In Anaeromyxobacter dehalogenans (strain 2CP-1 / ATCC BAA-258), this protein is Polyribonucleotide nucleotidyltransferase.